The following is a 708-amino-acid chain: E3 ubiquitin-protein ligase Praja-2 (708 aa).

The segment covering 1–10 (MSQYTEKEPA) has biased composition (basic and acidic residues). 2 disordered regions span residues 1–30 (MSQY…GYQT) and 53–90 (ERSL…SSLP). An N-acetylserine modification is found at S2. Positions 74 to 90 (ENSSGSSPLDQVDSSLP) are enriched in polar residues. S196 is subject to Phosphoserine. Disordered regions lie at residues 244–342 (GDTE…KQRS), 385–411 (TQRE…DNPF), and 425–495 (DEDS…QTSL). T246 carries the post-translational modification Phosphothreonine. Over residues 249 to 276 (VHQNSQEIQRSSQDEMVSTKQQNNTSQE) the composition is skewed to polar residues. Phosphoserine is present on residues S253, S309, and S323. The segment covering 322-332 (ISSSQVDQETG) has biased composition (polar residues). Positions 333–342 (FNRHEAKQRS) are enriched in basic and acidic residues. S342 is subject to Phosphoserine; by PKA. T389 carries the post-translational modification Phosphothreonine; by PKA. S432 carries the phosphoserine modification. Over residues 467–483 (NEPELQSDSSGPEEENQ) the composition is skewed to acidic residues. Polar residues predominate over residues 484 to 493 (ELSLQEGEQT). Positions 531–708 (DGNNNLEDDS…PSNDSIAEAP (178 aa)) are interaction with PRKAR1A, PRKAR2A and PRKAR2B. The interval 550–570 (WSLFDGFADGLGVAEAISYVD) is mediates interaction with TBC1D31. The RING-type; atypical zinc finger occupies 634-675 (CPICCSEYIKDDIATELPCHHFFHKPCVSIWLQKSGTCPVCR). Residues 685–708 (ASAAPSSEPDPDAPPSNDSIAEAP) form a disordered region. Residues 699-708 (PSNDSIAEAP) show a composition bias toward low complexity.

As to quaternary structure, binds ubiquitin-conjugating enzymes (E2s). In vitro, interacts with the ubiquitin-conjugating enzyme, UBE2D2. The phosphorylated form interacts with PRKAR1A, PRKAR2A and PRKAR2B. Binds the catalytic subunits of cAMP-dependent protein kinase. Interacts with MFHAS1. Interacts with TBC1D31; the interaction is direct and recruits PJA2 to centrosomes.

It is found in the cytoplasm. The protein resides in the cell membrane. The protein localises to the endoplasmic reticulum membrane. It localises to the golgi apparatus membrane. Its subcellular location is the synapse. It is found in the postsynaptic density. The protein resides in the cytoskeleton. The protein localises to the microtubule organizing center. It localises to the centrosome. The catalysed reaction is S-ubiquitinyl-[E2 ubiquitin-conjugating enzyme]-L-cysteine + [acceptor protein]-L-lysine = [E2 ubiquitin-conjugating enzyme]-L-cysteine + N(6)-ubiquitinyl-[acceptor protein]-L-lysine.. It functions in the pathway protein modification; protein ubiquitination. Functionally, has E2-dependent E3 ubiquitin-protein ligase activity. Responsible for ubiquitination of cAMP-dependent protein kinase type I and type II-alpha/beta regulatory subunits and for targeting them for proteasomal degradation. Essential for PKA-mediated long-term memory processes. Through the ubiquitination of MFHAS1, positively regulates the TLR2 signaling pathway that leads to the activation of the downstream p38 and JNK MAP kinases and promotes the polarization of macrophages toward the pro-inflammatory M1 phenotype. Plays a role in ciliogenesis by ubiquitinating OFD1. In Pongo abelii (Sumatran orangutan), this protein is E3 ubiquitin-protein ligase Praja-2 (PJA2).